A 333-amino-acid chain; its full sequence is Autoinducer 2 import system permease protein LsrD (333 aa).

The next 10 membrane-spanning stretches (helical) occupy residues 7 to 27 (YGWE…FGLS), 45 to 65 (ICIG…GIDI), 67 to 87 (FGST…AGVP), 90 to 110 (VAIP…AGLI), 118 to 138 (LVIT…LSGL), 162 to 182 (LFGL…FWLL), 212 to 232 (TLCM…ILLV), 240 to 260 (SDLG…GGAN), 261 to 281 (IYGG…VGYL), and 288 to 308 (IGTP…LVVV).

The protein belongs to the binding-protein-dependent transport system permease family. AraH/RbsC subfamily. The complex is composed of two ATP-binding proteins (LsrA), two transmembrane proteins (LsrC and LsrD) and a solute-binding protein (LsrB).

The protein localises to the cell inner membrane. In terms of biological role, part of the ABC transporter complex LsrABCD involved in autoinducer 2 (AI-2) import. Probably responsible for the translocation of the substrate across the membrane. This Yersinia pestis bv. Antiqua (strain Antiqua) protein is Autoinducer 2 import system permease protein LsrD (lsrD).